The primary structure comprises 149 residues: ER export of PMA1 protein 1 (149 aa).

Residues 1-6 (MNLYGY) are Lumenal-facing. A helical; Signal-anchor for type II membrane protein transmembrane segment spans residues 7 to 27 (FLLLIIVIAFIALLPLFSGIG). The Cytoplasmic portion of the chain corresponds to 28 to 149 (TFKLTKPKSS…KKNEAYEGFV (122 aa)).

In terms of assembly, interacts with PMA1 and PSG1.

The protein localises to the endoplasmic reticulum membrane. Its subcellular location is the cytoplasmic vesicle. It is found in the COPI-coated vesicle membrane. The protein resides in the COPII-coated vesicle membrane. It localises to the golgi apparatus membrane. In terms of biological role, specific cargo receptor protein for the plasma membrane ATPase PMA1 that acts with PSG1 to promote the transport and maturation of PMA1. EXP1 and PSG1 probably act sequentially to promote PMA1 sorting between the ER and the Golgi, with EXP1 promoting PMA1 export from the ER to the Golgi while PSG1 has a role in PMA1 maturation or quality control in the Golgi. This Saccharomyces cerevisiae (strain ATCC 204508 / S288c) (Baker's yeast) protein is ER export of PMA1 protein 1.